The chain runs to 91 residues: Early E3B 10.4 kDa protein (91 aa).

An N-terminal signal peptide occupies residues Met1–Thr22. Residues Ala23–Pro34 lie on the Lumenal side of the membrane. The chain crosses the membrane as a helical span at residues Phe35 to Phe60. Over Gln61–Ile91 the chain is Cytoplasmic.

This sequence belongs to the adenoviridae E3B family.

The protein localises to the host endoplasmic reticulum membrane. Functionally, down-regulates the EGF receptor. The protein is Early E3B 10.4 kDa protein of Human adenovirus B serotype 3 (HAdV-3).